Reading from the N-terminus, the 160-residue chain is Cytochrome b6-f complex subunit 4 (160 aa).

The next 3 membrane-spanning stretches (helical) occupy residues 36–56 (LLYI…GLSV), 95–115 (LLGV…PFIE), and 131–151 (TLFL…TLPI).

It belongs to the cytochrome b family. PetD subfamily. In terms of assembly, the 4 large subunits of the cytochrome b6-f complex are cytochrome b6, subunit IV (17 kDa polypeptide, petD), cytochrome f and the Rieske protein, while the 4 small subunits are petG, petL, petM and petN. The complex functions as a dimer.

It localises to the plastid. Its subcellular location is the chloroplast thylakoid membrane. Functionally, component of the cytochrome b6-f complex, which mediates electron transfer between photosystem II (PSII) and photosystem I (PSI), cyclic electron flow around PSI, and state transitions. The protein is Cytochrome b6-f complex subunit 4 of Tetradesmus obliquus (Green alga).